Here is a 1732-residue protein sequence, read N- to C-terminus: Transient receptor potential cation channel subfamily M member 3 (1732 aa).

Residues 1–894 (MPEPWGTVYF…RKIYEFYNAP (894 aa)) are Cytoplasmic-facing. Calmodulin-binding regions lie at residues 192–215 (NFEL…MTTG), 300–323 (TGKY…QKIN), 601–624 (RKRF…KLLG), and 793–816 (RKNS…LEFK). The segment at 617–625 (PKALKLLGM) is required for the inhibitory action of G-beta/gamma-subunits of heterotrimeric G-proteins. Ser-796 provides a ligand contact to 1,2-dioctanoyl-sn-glycero-3-phospho-(1D-myo-inositol-4,5-bisphosphate). A helical transmembrane segment spans residues 895 to 918 (IVKFWFYTLAYIGYLMLFNYIVLV). The Extracellular portion of the chain corresponds to 919–925 (KMERWPS). The helical transmembrane segment at 926 to 948 (TQEWIVISYIFTLGIEKMREILM) threads the bilayer. The Cytoplasmic segment spans residues 949-964 (SEPGKLLQKVKVWLQE). A helical transmembrane segment spans residues 965-985 (YWNVTDLIAILLFSVGMILRL). The Extracellular portion of the chain corresponds to 986-989 (QDQP). The chain crosses the membrane as a helical span at residues 990–1013 (FRSDGRVIYCVNIIYWYIRLLDIF). Residues 1014-1028 (GVNKYLGPYVMMIGK) are Cytoplasmic-facing. 1,2-dioctanoyl-sn-glycero-3-phospho-(1D-myo-inositol-4,5-bisphosphate) is bound by residues Lys-1017 and Tyr-1018. The chain crosses the membrane as a helical span at residues 1029-1056 (MMIDMMYFVIIMLVVLMSFGVARQAILF). The Extracellular segment spans residues 1057–1111 (PNEEPSWKLAKNIFYMPYWMIYGEVFADQIDPPCGQNETREDGKIIQLPPCKTGA). Residues 1112 to 1137 (WIVPAIMACYLLVANILLVNLLIAVF) traverse the membrane as a helical segment. Topologically, residues 1138–1732 (NNTFFEVKSI…AFQSFESKHN (595 aa)) are cytoplasmic. Residues 1241 to 1301 (ERIRVTSERV…LERLTGLERA (61 aa)) are a coiled coil. Low complexity predominate over residues 1459 to 1476 (PVPSTAPSSSAYATLAPT). 2 disordered regions span residues 1459-1478 (PVPS…PTDR) and 1611-1732 (REAE…SKHN). Composition is skewed to polar residues over residues 1635–1653 (AISS…NNIT), 1690–1701 (NTASLRNPFQRS), and 1720–1732 (RTSA…SKHN).

Belongs to the transient receptor (TC 1.A.4) family. LTrpC subfamily. TRPM3 sub-subfamily. In terms of assembly, homotetramer. Interacts with TRPM1; the interaction results in the formation of a heteromultimeric cation channel complex that are functionally different from the homomeric channels. Expressed primarily in the kidney and, at lower levels, in brain, testis, ovary, pancreas and spinal cord. Expression in the brain and kidney was determined at protein level. In the kidney, expressed predominantly in the collecting tubular epithelium in the medulla, medullary rays, and periglomerular regions; in the brain, highest levels are found in the cerebellum, choroid plexus, the locus coeruleus, the posterior thalamus and the substantia nigra. Down-regulated in renal tumors compared to normal kidney. Expressed in the lens.

Its subcellular location is the cell membrane. It catalyses the reaction Ca(2+)(in) = Ca(2+)(out). The catalysed reaction is Mn(2+)(in) = Mn(2+)(out). It carries out the reaction Zn(2+)(in) = Zn(2+)(out). The enzyme catalyses Mg(2+)(in) = Mg(2+)(out). Its activity is regulated as follows. Activated by the neurosteroid pregnelonone sulfate (PregS); PregS activates the channel by shifting its current-voltage activation curve toward more negative membrane potentials and also potentiates temperature-induced activation. Activated by sphingosine. Activated by heat. Intracellular Ca(2+) inhibits TRPM3 probably via interaction with Ca(2+)/calmodulin. Intracellular Mg(2+) inhibits TRPM3 activity. Both intracellular and extracellular protons block TRPM3 through propable binding sites in the pore region. Positively regulated by phosphoinositide phosphoinositol 4,5-biphosphate (PI(4,5)P2). Strongly inhibited by activation of G(i)-coupled receptors via direct binding with G-betagamma-subunits of heterotrimeric G-proteins. Functionally, constitutively active, non-selective divalent cation-conducting channel that is permeable to Ca(2+), Mn(2+), and Mg(2+), with a high permeability for Ca(2+). However, can be enhanced by increasing temperature and by ligands, including the endogenous neurosteroid pregnenolone sulfate and sphingosine-1 and suppressed by intracellular Mg(2+). Implicated in a variety of cellular processes, including insulin/peptide secretion, vascular constriction and dilation, noxious heat sensing, inflammatory and spontaneous pain sensitivity. In neurons of the dorsal root ganglia, functions as thermosensitive channel for the detection of noxious heat and spontaneous pain. Suggested to function as an ionotropic steroid receptor in beta-cell, indeed pregnenolone sulfate leads to Ca(2+) influx and enhanced insulin secretion. Mediates Zn(2+) uptake into the lumen of pancreatic beta cell secretory granules, thereby regulating insulin secretion. Forms heteromultimeric ion channels with TRPM1 which are permeable for Ca(2+) and Zn(2+) ions. Exists as multiple splice variants which differ significantly in their biophysical properties. The sequence is that of Transient receptor potential cation channel subfamily M member 3 from Homo sapiens (Human).